The sequence spans 258 residues: Redox-sensing transcriptional repressor Rex (258 aa).

A DNA-binding region (H-T-H motif) is located at residues 26–65 (LYLRALTALSERSVPTVSSEELAAAAGVNSAKLRKDFSYL). An NAD(+)-binding site is contributed by 100–105 (GIGNLG). The disordered stretch occupies residues 219-258 (AGEEAAADGAAPPVAARKQQRSTGSADQGPDGDVPAVMPA). Residues 225–234 (ADGAAPPVAA) are compositionally biased toward low complexity.

This sequence belongs to the transcriptional regulatory Rex family. As to quaternary structure, homodimer.

It is found in the cytoplasm. In terms of biological role, modulates transcription of respiratory genes in response to changes in cellular NADH/NAD(+) redox state. Binds to the DNA sequence motif 5'-TGTGAACGCGTTCACA-3' in the promoter of the cydABCD operon. May play a general role as a sensor of cellular redox balance. The sequence is that of Redox-sensing transcriptional repressor Rex from Streptomyces coelicolor (strain ATCC BAA-471 / A3(2) / M145).